Reading from the N-terminus, the 200-residue chain is Molybdenum cofactor guanylyltransferase (200 aa).

Residues 15–17, Lys28, Asp74, and Asp104 each bind GTP; that span reads LAG. Asp104 serves as a coordination point for Mg(2+).

It belongs to the MobA family. As to quaternary structure, monomer. The cofactor is Mg(2+).

The protein resides in the cytoplasm. The enzyme catalyses Mo-molybdopterin + GTP + H(+) = Mo-molybdopterin guanine dinucleotide + diphosphate. Transfers a GMP moiety from GTP to Mo-molybdopterin (Mo-MPT) cofactor (Moco or molybdenum cofactor) to form Mo-molybdopterin guanine dinucleotide (Mo-MGD) cofactor. This Pseudomonas fluorescens (strain Pf0-1) protein is Molybdenum cofactor guanylyltransferase.